The following is a 454-amino-acid chain: MSHNDTIVAQATPPGRGGVGILRISGLKARDVAQEVLGKLPKPRYADYLPFKDVDGSALDQGIALWFPGPNSFTGEDVLELQGHGGPVILDLLLKRILTLPGVRIARPGEFSERAFLNDKLDLAQAEAIADLIDASSEQAARSALNSLQGAFSARVNHLVEALTHLRIYVEAAIDFPDEEIDFLSDGKIEAQLNGVIADLDAVRTEARQGSLLREGMKVVIAGRPNAGKSSLLNALAGREAAIVTDIAGTTRDVLREHIHIDGMPLHIIDTAGLRDANDEVERIGIERAWQEIEQADRVLFMVDGTTTDAVDPADIWPDFIARLPKNLPITVVRNKADITGETLGISEVNGHSLVRLSARTGEGVDVLRNHLKQSMGFDTNMEGGFLARRRHLQALAEAANHLEQGKAQLLGAWAGELLAEELRLAQQSLSEITGEFTSDDLLGRIFSSFCIGK.

Positions 23, 80, and 120 each coordinate (6S)-5-formyl-5,6,7,8-tetrahydrofolate. The region spanning 216-377 (GMKVVIAGRP…LRNHLKQSMG (162 aa)) is the TrmE-type G domain. Asn-226 lines the K(+) pocket. Residues 226 to 231 (NAGKSS), 245 to 251 (TDIAGTT), 270 to 273 (DTAG), 335 to 338 (NKAD), and 358 to 360 (SAR) contribute to the GTP site. Ser-230 serves as a coordination point for Mg(2+). K(+) contacts are provided by Thr-245, Ile-247, and Thr-250. A Mg(2+)-binding site is contributed by Thr-251. Lys-454 is a binding site for (6S)-5-formyl-5,6,7,8-tetrahydrofolate.

It belongs to the TRAFAC class TrmE-Era-EngA-EngB-Septin-like GTPase superfamily. TrmE GTPase family. As to quaternary structure, homodimer. Heterotetramer of two MnmE and two MnmG subunits. It depends on K(+) as a cofactor.

The protein localises to the cytoplasm. Functionally, exhibits a very high intrinsic GTPase hydrolysis rate. Involved in the addition of a carboxymethylaminomethyl (cmnm) group at the wobble position (U34) of certain tRNAs, forming tRNA-cmnm(5)s(2)U34. The chain is tRNA modification GTPase MnmE from Salmonella typhi.